A 170-amino-acid chain; its full sequence is Flavin reductase (170 aa).

NAD(+) contacts are provided by residues serine 51, histidine 138, and 159-162 (FYRG).

The protein belongs to the non-flavoprotein flavin reductase family. Homodimer. Likely forms a loose transient complex with monooxygenases for which it provides FMNH(2).

The catalysed reaction is FMNH2 + NAD(+) = FMN + NADH + 2 H(+). It carries out the reaction FADH2 + NAD(+) = FAD + NADH + 2 H(+). Functionally, catalyzes the reduction of FMN, and to a lesser extent, FAD, using NADH as an electron donor. Is able to provide the FMNH(2) required for the Baeyer-Villiger oxidations catalyzed by 2,5-diketocamphane monooxygenases and 3,6-diketocamphane monooxygenase. NADPH acts as a very poor cosubstrate. This Pseudomonas putida (Arthrobacter siderocapsulatus) protein is Flavin reductase.